We begin with the raw amino-acid sequence, 906 residues long: Coatomer subunit beta' (906 aa).

WD repeat units lie at residues 13 to 52, 55 to 94, 97 to 136, 140 to 180, 183 to 224, 227 to 266, 350 to 388, and 390 to 425; these read ARSD…LVKT, VCDL…RVHM, AHSD…SCSQ, GHTH…PNFT, GHEK…CVQT, GHAQ…LEST, SCEI…NKSF, and SAQE…KSFK. Lys627 carries the N6-acetyllysine modification. The stretch at 746–783 is one WD 9 repeat; sequence IRTGRLPEAAFLARTYLPSQVSRVVKLWRENLSKVNQK. The interval 837 to 862 is disordered; the sequence is EEAKGFQPSRSTAQQELDGKPASPTP. Position 859 is a phosphoserine (Ser859). Thr861 is subject to Phosphothreonine. The stretch at 866-890 forms a coiled coil; sequence ASHTANKEEKSLLELEVDLDNLELE.

The protein belongs to the WD repeat COPB2 family. Oligomeric complex that consists of at least the alpha, beta, beta', gamma, delta, epsilon and zeta subunits. Probably interacts with PEX11A. Interacts with SCYL1. Interacts with JAGN1.

It is found in the cytoplasm. It localises to the cytosol. The protein localises to the golgi apparatus membrane. Its subcellular location is the cytoplasmic vesicle. The protein resides in the COPI-coated vesicle membrane. Its function is as follows. The coatomer is a cytosolic protein complex that binds to dilysine motifs and reversibly associates with Golgi non-clathrin-coated vesicles, which further mediate biosynthetic protein transport from the ER, via the Golgi up to the trans Golgi network. Coatomer complex is required for budding from Golgi membranes, and is essential for the retrograde Golgi-to-ER transport of dilysine-tagged proteins. In mammals, the coatomer can only be recruited by membranes associated to ADP-ribosylation factors (ARFs), which are small GTP-binding proteins; the complex also influences the Golgi structural integrity, as well as the processing, activity, and endocytic recycling of LDL receptors. This coatomer complex protein, essential for Golgi budding and vesicular trafficking, is a selective binding protein (RACK) for protein kinase C, epsilon type. It binds to Golgi membranes in a GTP-dependent manner. This Macaca fascicularis (Crab-eating macaque) protein is Coatomer subunit beta' (COPB2).